The chain runs to 190 residues: Ribosome hibernation promotion factor (190 aa).

This sequence belongs to the HPF/YfiA ribosome-associated protein family. Long HPF subfamily. Interacts with 100S ribosomes.

Its subcellular location is the cytoplasm. Required for dimerization of active 70S ribosomes into 100S ribosomes in stationary phase; 100S ribosomes are translationally inactive and sometimes present during exponential growth. The polypeptide is Ribosome hibernation promotion factor (Rhizobium meliloti (strain 1021) (Ensifer meliloti)).